Consider the following 229-residue polypeptide: Non-structural protein P8 (229 aa).

The next 2 membrane-spanning stretches (helical) occupy residues 119–139 and 162–182; these read IIHM…VCTL and SLNP…MVCA.

The protein belongs to the orbivirus NS3 family. As to quaternary structure, forms homooligomers via coiled-coil motif. Interacts with host OPTN; this interaction inhibits innate immune response.

It is found in the host cell membrane. The protein localises to the host Golgi apparatus. In terms of biological role, plays a role in the inhibition of host innate immune response. Interacts with host OPTN and thus inhibits the recruitment of TBK1 to the host Golgi apparatus. In turn, downstream partner IRF3 cannot be activated and IFN-beta production is impaired. Its function is as follows. Facilitates viral particle release either by increasing plasma membrane permeability through a viroporin-like activity or by viral budding. In Antilocapra americana (Pronghorn), this protein is Non-structural protein P8 (Segment-10).